Reading from the N-terminus, the 303-residue chain is N-acetyl-D-glucosamine kinase (303 aa).

ATP is bound by residues 4–11 and 133–140; these read GFDIGGSK and GVGGGLIV. Zn(2+) contacts are provided by His157, Cys177, Cys179, and Cys184.

The protein belongs to the ROK (NagC/XylR) family. NagK subfamily.

It catalyses the reaction N-acetyl-D-glucosamine + ATP = N-acetyl-D-glucosamine 6-phosphate + ADP + H(+). It participates in cell wall biogenesis; peptidoglycan recycling. In terms of biological role, catalyzes the phosphorylation of N-acetyl-D-glucosamine (GlcNAc) derived from cell-wall degradation, yielding GlcNAc-6-P. This is N-acetyl-D-glucosamine kinase from Erwinia tasmaniensis (strain DSM 17950 / CFBP 7177 / CIP 109463 / NCPPB 4357 / Et1/99).